The following is a 461-amino-acid chain: Gram-negative bacteria-binding protein 2 (461 aa).

Positions 1–20 are cleaved as a signal peptide; sequence MRWEFLPCLLLLISNNKIFG. A CBM39 domain is found at 21–115; it reads FKVPSINFEM…TRVIINTRLL (95 aa). N-linked (GlcNAc...) asparagine glycosylation is found at asparagine 71, asparagine 170, asparagine 177, and asparagine 364. Positions 179-461 constitute a GH16 domain; sequence TTWKHDIRQR…VIDYVRVYAE (283 aa).

It belongs to the insect beta-1,3-glucan binding protein family.

The protein resides in the secreted. Functionally, involved in the recognition of invading microorganisms. Binds specifically to beta-1,3-glucan and activates the phenoloxidase cascade. The protein is Gram-negative bacteria-binding protein 2 of Drosophila melanogaster (Fruit fly).